Reading from the N-terminus, the 1638-residue chain is Ciliary rootlet coiled-coil protein 2 (1638 aa).

The segment covering Met-1 to Gly-20 has biased composition (polar residues). Disordered stretches follow at residues Met-1–Leu-21, Arg-39–Ser-92, Ala-396–His-423, and Thr-1168–Glu-1213. Positions Ser-67–Pro-82 are enriched in low complexity. Positions Thr-85–Glu-144 form a coiled coil. Positions Ser-406 to Ser-421 are enriched in polar residues. Coiled coils occupy residues Leu-426–Glu-1234 and Leu-1281–Ala-1315. The segment covering Arg-1180 to Val-1193 has biased composition (basic and acidic residues). Disordered regions lie at residues Arg-1338–Asp-1383 and Ala-1506–Ser-1551. Over residues Ser-1349 to Tyr-1371 the composition is skewed to polar residues. Coiled coils occupy residues Arg-1412 to Ala-1506 and Arg-1542 to Glu-1576.

It belongs to the rootletin family.

The protein is Ciliary rootlet coiled-coil protein 2 of Mus musculus (Mouse).